The sequence spans 1593 residues: Nischarin (1593 aa).

Residues 1-134 (MAAATLSFGP…GVTAALAEEL (134 aa)) form a necessary for binding to phosphoinositide-3-P; not sufficient for targeting to endosomes region. A PX domain is found at 12–122 (REAEPAKEAR…AHFLHFHLYE (111 aa)). Positions 121-695 (YEVNGVTAAL…ERLALEWALG (575 aa)) are necessary for homooligomerization and targeting to endosomes. The tract at residues 246–869 (MSVRFSATSM…LVYSDKRMVQ (624 aa)) is interaction with PAK1. 6 LRR repeats span residues 290–311 (ALTT…VKLI), 313–334 (KIEY…QHLY), 335–356 (NLVH…HTKL), 358–379 (NVKT…HKLY), 380–401 (SLVN…KSIG), and 405–426 (CLER…RTKV). Residues 466 to 480 (SKLSNTEKKAGEDFR) are compositionally biased toward basic and acidic residues. The interval 466 to 499 (SKLSNTEKKAGEDFRLPPAPCIRPGGSPPAAPAS) is disordered. The segment covering 482-496 (PPAPCIRPGGSPPAA) has biased composition (pro residues). 3 positions are modified to phosphoserine: Ser543, Ser545, and Ser548. The stretch at 624-694 (IEAANQREEA…EERLALEWAL (71 aa)) forms a coiled coil. A disordered region spans residues 629 to 687 (QREEAHGEQGEEEEEEEEEEDVAENRYFEMGPPDAEEEEGSGQGEEDEEDEDEEAEEER). 2 stretches are compositionally biased toward acidic residues: residues 638–650 (GEEE…EEDV) and 662–685 (DAEE…EAEE). The tract at residues 661–869 (PDAEEEEGSG…LVYSDKRMVQ (209 aa)) is interaction with LIMK. Positions 709–807 (KVLWCFLIHV…ANLHEFHADL (99 aa)) are interaction with ITGA5. Residues 1016-1185 (NPSAKPRNQP…PAGGPAPAEA (170 aa)) are disordered. Composition is skewed to low complexity over residues 1038–1069 (ETPA…LAPV) and 1081–1158 (AEAP…APAP). 10 tandem repeats follow at residues 1081–1086 (AEAPAA), 1087–1092 (AEAPAA), 1093–1098 (AEAPAA), 1099–1104 (AEAPAA), 1105–1110 (AEAPAA), 1111–1116 (AEAPAA), 1123–1128 (AEAPAA), 1129–1134 (AEAPAA), 1135–1140 (AEAPAA), and 1141–1146 (AEAPAA). Residues 1081–1146 (AEAPAAAEAP…APAAAEAPAA (66 aa)) are 10 X 6 AA tandem repeat of A-E-A-P-A-A. Residues 1159–1179 (NQAPAPARGPAPARGPAPAGG) are compositionally biased toward pro residues. Residue Thr1371 is modified to Phosphothreonine. The residue at position 1373 (Ser1373) is a Phosphoserine.

As to quaternary structure, homooligomer. Interacts with GRB2. Interacts with PIK3R1; probably associates with the PI3-kinase complex. Interacts with IRS4. Found in a complex with ITGA5 and PAK1. Found in a complex with LIMK1 and PAK1. Interacts with ITGA5 (via cytoplasmic domain); this interaction is direct. Interacts with PAK1 (via kinase domain); this interaction is direct and is increased upon activation of PAK1. Interacts with LIMK1 (via PDZ and kinase domain); this interaction is direct. Interacts with LIMK2; this interaction depends on LIMK2 activity. Interacts with RAC1 (activated state). Interacts with STK11; this interaction may increase STK11 activity. As to expression, highly expressed in brain and kidney. Moderately expressed in heart, liver, lung and skeletal muscle. Not detected in spleen and testis.

It localises to the cell membrane. It is found in the cytoplasm. Its subcellular location is the early endosome. The protein localises to the recycling endosome. Functionally, acts either as the functional imidazoline-1 receptor (I1R) candidate or as a membrane-associated mediator of the I1R signaling. Binds numerous imidazoline ligands that induces initiation of cell-signaling cascades triggering to cell survival, growth and migration. Its activation by the agonist rilmenidine induces an increase in phosphorylation of mitogen-activated protein kinases MAPK1 and MAPK3 in rostral ventrolateral medulla (RVLM) neurons that exhibited rilmenidine-evoked hypotension. Blocking its activation with efaroxan abolished rilmenidine-induced mitogen-activated protein kinase phosphorylation in RVLM neurons. Acts as a modulator of Rac-regulated signal transduction pathways. Suppresses Rac1-stimulated cell migration by interacting with PAK1 and inhibiting its kinase activity. Also blocks Pak-independent Rac signaling by interacting with RAC1 and inhibiting Rac1-stimulated NF-kB response element and cyclin D1 promoter activation. Also inhibits LIMK1 kinase activity by reducing LIMK1 'Tyr-508' phosphorylation. Inhibits Rac-induced cell migration and invasion in breast and colon epithelial cells. Inhibits lamellipodia formation, when overexpressed. Plays a role in protection against apoptosis. Involved in association with IRS4 in the enhancement of insulin activation of MAPK1 and MAPK3. When overexpressed, induces a redistribution of cell surface ITGA5 integrin to intracellular endosomal structures. This chain is Nischarin (Nisch), found in Mus musculus (Mouse).